A 193-amino-acid chain; its full sequence is 7-methyl-GTP pyrophosphatase (193 aa).

Aspartate 70 functions as the Proton acceptor in the catalytic mechanism.

It belongs to the Maf family. YceF subfamily. The cofactor is a divalent metal cation.

It is found in the cytoplasm. It carries out the reaction N(7)-methyl-GTP + H2O = N(7)-methyl-GMP + diphosphate + H(+). In terms of biological role, nucleoside triphosphate pyrophosphatase that hydrolyzes 7-methyl-GTP (m(7)GTP). May have a dual role in cell division arrest and in preventing the incorporation of modified nucleotides into cellular nucleic acids. This is 7-methyl-GTP pyrophosphatase from Aliivibrio fischeri (strain ATCC 700601 / ES114) (Vibrio fischeri).